A 310-amino-acid chain; its full sequence is Protoheme IX farnesyltransferase 2 (310 aa).

9 helical membrane passes run 21–41 (IWYL…GIYG), 46–66 (IATW…ANVL), 99–119 (FGLF…LTTT), 125–145 (WAAA…SYML), 153–173 (IVLG…AVTT), 180–200 (GLVM…ALTL), 226–246 (VIAV…LITL), 256–276 (VYLA…AWVV), and 284–304 (AWVL…ALMV).

The protein belongs to the UbiA prenyltransferase family. Protoheme IX farnesyltransferase subfamily.

Its subcellular location is the cell membrane. The enzyme catalyses heme b + (2E,6E)-farnesyl diphosphate + H2O = Fe(II)-heme o + diphosphate. Its pathway is porphyrin-containing compound metabolism; heme O biosynthesis; heme O from protoheme: step 1/1. Its function is as follows. Converts heme B (protoheme IX) to heme O by substitution of the vinyl group on carbon 2 of heme B porphyrin ring with a hydroxyethyl farnesyl side group. This is Protoheme IX farnesyltransferase 2 from Cenarchaeum symbiosum (strain A).